The primary structure comprises 183 residues: Cell division protein SepF (183 aa).

The segment at 13–58 (MHDDDDFDDDYEDYDDDFDEDYEDDKPSARKRLFTGSSKKDSVADE) is disordered. The span at 16-36 (DDDFDDDYEDYDDDFDEDYED) shows a compositional bias: acidic residues.

This sequence belongs to the SepF family. Homodimer. Interacts with FtsZ.

It localises to the cytoplasm. In terms of biological role, cell division protein that is part of the divisome complex and is recruited early to the Z-ring. Probably stimulates Z-ring formation, perhaps through the cross-linking of FtsZ protofilaments. Its function overlaps with FtsA. This chain is Cell division protein SepF, found in Lachnospira eligens (strain ATCC 27750 / DSM 3376 / VPI C15-48 / C15-B4) (Eubacterium eligens).